A 204-amino-acid chain; its full sequence is uncharacterized protein (204 aa).

A disordered region spans residues 77-111 (APHGSRIPGRCRRSPRCSRRPGGSRLRGGTWTPRL). Positions 85 to 95 (GRCRRSPRCSR) are enriched in basic residues. Positions 96 to 105 (RPGGSRLRGG) are enriched in low complexity.

This is an uncharacterized protein from Homo sapiens (Human).